We begin with the raw amino-acid sequence, 91 residues long: Small ribosomal subunit protein uS19 (91 aa).

This sequence belongs to the universal ribosomal protein uS19 family.

Functionally, protein S19 forms a complex with S13 that binds strongly to the 16S ribosomal RNA. The protein is Small ribosomal subunit protein uS19 of Prochlorococcus marinus subsp. pastoris (strain CCMP1986 / NIES-2087 / MED4).